The sequence spans 683 residues: Protein hook (683 aa).

A Calponin-homology (CH) domain is found at 5-123 (NGMYYSLLEW…RLLQLVLGCA (119 aa)). Coiled coils occupy residues 135–440 (EIMC…LKCG) and 484–594 (QTAL…AKEV).

This sequence belongs to the hook family. Homodimer. Interacts with microtubules via its N-terminus.

It localises to the cytoplasm. It is found in the cytoskeleton. The protein localises to the endosome. Its subcellular location is the synapse. Involved in endocytic trafficking by stabilizing organelles of the endocytic pathway. Probably acts as a cytoskeletal linker protein required to tether endosome vesicles to the cytoskeleton. Involved in modulation of endocytosis at stages required for down-regulation of membrane proteins that control synapse size. Not involved in synaptic vesicle recycling. Required in R7 cells for boss endocytosis into multivesicular bodies (MVBs). Has a role in regulating adult longevity. The protein is Protein hook of Drosophila grimshawi (Hawaiian fruit fly).